A 473-amino-acid polypeptide reads, in one-letter code: 3-isopropylmalate dehydratase large subunit (473 aa).

Residues C354, C414, and C417 each contribute to the [4Fe-4S] cluster site.

This sequence belongs to the aconitase/IPM isomerase family. LeuC type 1 subfamily. In terms of assembly, heterodimer of LeuC and LeuD. [4Fe-4S] cluster serves as cofactor.

It catalyses the reaction (2R,3S)-3-isopropylmalate = (2S)-2-isopropylmalate. The protein operates within amino-acid biosynthesis; L-leucine biosynthesis; L-leucine from 3-methyl-2-oxobutanoate: step 2/4. Catalyzes the isomerization between 2-isopropylmalate and 3-isopropylmalate, via the formation of 2-isopropylmaleate. The protein is 3-isopropylmalate dehydratase large subunit of Mycobacterium ulcerans (strain Agy99).